A 529-amino-acid polypeptide reads, in one-letter code: Glycerol kinase 5 (529 aa).

The ATP site is built by Ser28 and Ser29. Positions 98, 275, and 276 each coordinate glycerol. Thr297, Gly340, and Gly440 together coordinate ATP.

Belongs to the FGGY kinase family.

Its subcellular location is the cytoplasm. It carries out the reaction glycerol + ATP = sn-glycerol 3-phosphate + ADP + H(+). Its pathway is polyol metabolism; glycerol degradation via glycerol kinase pathway; sn-glycerol 3-phosphate from glycerol: step 1/1. In terms of biological role, skin-specific kinase that plays a key role in glycerol metabolism, catalyzing its phosphorylation to produce sn-glycerol 3-phosphate. Involved in skin-specific regulation of sterol regulatory element-binding protein (SREBP) processing and lipid biosynthesis. The polypeptide is Glycerol kinase 5 (Homo sapiens (Human)).